The following is a 626-amino-acid chain: Bifurcating [FeFe] hydrogenase beta subunit (626 aa).

198–201 is an NAD(+) binding site; the sequence is GGGG. Residues Lys-207 and 224-228 contribute to the FMN site; that span reads NGDEG. Asp-229 contacts NAD(+). FMN is bound by residues 312 to 317 and 350 to 352; these read FVCGEE and INN. The [4Fe-4S] cluster site is built by Cys-485, Cys-488, Cys-491, Cys-531, Cys-578, Cys-581, Cys-584, Cys-588, Cys-608, Cys-611, Cys-614, and Cys-618. 4Fe-4S ferredoxin-type domains lie at 569 to 598 and 599 to 626; these read KKYV…GERG and KPYT…IELV.

It belongs to the complex I 51 kDa subunit family. In terms of assembly, heterotrimer composed of HydA (alpha subunit), HydB (beta subunit) and HydC (gamma subunit). Near neutral and acidic pH conditions favor oligomerization of the heterotrimeric holoenzyme. Requires [2Fe-2S] cluster as cofactor. The cofactor is [4Fe-4S] cluster. It depends on FMN as a cofactor.

The protein localises to the cytoplasm. It catalyses the reaction 2 H2 + 2 oxidized [2Fe-2S]-[ferredoxin] + NAD(+) = 2 reduced [2Fe-2S]-[ferredoxin] + NADH + 3 H(+). Functionally, catalyzes the oxidation of the physiological electron carriers NADH and reduced ferredoxin, coupled to the production of H(2). Acts as a bifurcating [FeFe] hydrogenase, which uses the exergonic oxidation of reduced ferredoxin to drive the unfavorable oxidation of NADH to produce H(2). The beta subunit contains flavin- and NAD-binding sites and is potentially the site for NADH oxidation, with the subsequent shuttling of electrons to the alpha subunit. The polypeptide is Bifurcating [FeFe] hydrogenase beta subunit (Thermotoga maritima (strain ATCC 43589 / DSM 3109 / JCM 10099 / NBRC 100826 / MSB8)).